A 452-amino-acid chain; its full sequence is MPDMLTLWTDIKALFEENNSKTAYATWIETAKPIALDGNKLTLELPSPLHRDYWTHQHLDQQLVEYAYQAAHEDIQPVLILENERQQQATLKAKTAPVAAGEPVEPTPTFMKETALNSRYTFDTFVIGKGNQMAHAAALVVSEEPGVMYNPLFFYGGVGLGKTHLMHAIGNKMLEDRPDTKVKYVTSEAFTNDFINAIQTRTQEQFRQEYRNVDLLLVDDIQFFANKEGTQEEFFHTFNALYDDGKQIVLTSDRLPNEIPKLQDRLVSRFAWGLSVDITPPDLETRIAILRNKADADQIDIPDDTLSYIAGQIDSNVRELEGALARVQAYSQLMHQPIATDLAAEALKSLNLANASDAVTIPVIQDRVAKYFDVSLKDLKGKKRKKAIVMPRQIAMYLSRELTEASLPRIGNEFGGKDHTTVIHAYDKITESLKTDPQLQKDIDSLKDDLRR.

Positions 1–72 (MPDMLTLWTD…LVEYAYQAAH (72 aa)) are domain I, interacts with DnaA modulators. A domain II region spans residues 72-114 (HEDIQPVLILENERQQQATLKAKTAPVAAGEPVEPTPTFMKET). The tract at residues 115 to 331 (ALNSRYTFDT…GALARVQAYS (217 aa)) is domain III, AAA+ region. ATP-binding residues include Gly-159, Gly-161, Lys-162, and Thr-163. The tract at residues 332-452 (QLMHQPIATD…IDSLKDDLRR (121 aa)) is domain IV, binds dsDNA.

It belongs to the DnaA family. As to quaternary structure, oligomerizes as a right-handed, spiral filament on DNA at oriC.

It localises to the cytoplasm. Plays an essential role in the initiation and regulation of chromosomal replication. ATP-DnaA binds to the origin of replication (oriC) to initiate formation of the DNA replication initiation complex once per cell cycle. Binds the DnaA box (a 9 base pair repeat at the origin) and separates the double-stranded (ds)DNA. Forms a right-handed helical filament on oriC DNA; dsDNA binds to the exterior of the filament while single-stranded (ss)DNA is stabiized in the filament's interior. The ATP-DnaA-oriC complex binds and stabilizes one strand of the AT-rich DNA unwinding element (DUE), permitting loading of DNA polymerase. After initiation quickly degrades to an ADP-DnaA complex that is not apt for DNA replication. Binds acidic phospholipids. The protein is Chromosomal replication initiator protein DnaA of Levilactobacillus brevis (strain ATCC 367 / BCRC 12310 / CIP 105137 / JCM 1170 / LMG 11437 / NCIMB 947 / NCTC 947) (Lactobacillus brevis).